The primary structure comprises 237 residues: ATP synthase subunit a (237 aa).

4 helical membrane passes run 17 to 37 (LSDM…AVAA), 78 to 98 (LGVT…PFWL), 178 to 198 (ILLG…CGSI), and 201 to 221 (MVIM…AFIF).

Belongs to the ATPase A chain family. F-type ATPases have 2 components, CF(1) - the catalytic core - and CF(0) - the membrane proton channel. CF(1) has five subunits: alpha(3), beta(3), gamma(1), delta(1), epsilon(1). CF(0) has three main subunits: a(1), b(2) and c(9-12). The alpha and beta chains form an alternating ring which encloses part of the gamma chain. CF(1) is attached to CF(0) by a central stalk formed by the gamma and epsilon chains, while a peripheral stalk is formed by the delta and b chains.

The protein resides in the cell membrane. Its function is as follows. Key component of the proton channel; it plays a direct role in the translocation of protons across the membrane. The polypeptide is ATP synthase subunit a (Bacillus caldotenax).